We begin with the raw amino-acid sequence, 42 residues long: Large ribosomal subunit protein P2 (42 aa).

This sequence belongs to the eukaryotic ribosomal protein P1/P2 family. As to quaternary structure, P1 and P2 exist as dimers at the large ribosomal subunit. Post-translationally, phosphorylated.

Its function is as follows. Plays an important role in the elongation step of protein synthesis. The polypeptide is Large ribosomal subunit protein P2 (Triticum aestivum (Wheat)).